Reading from the N-terminus, the 339-residue chain is Dihydroorotate dehydrogenase (quinone) (339 aa).

FMN is bound by residues 64-68 (AGADK) and T88. A substrate-binding site is contributed by K68. A substrate-binding site is contributed by 113–117 (NRNGF). The FMN site is built by N141 and N174. N174 is a substrate binding site. Catalysis depends on S177, which acts as the Nucleophile. N179 is a substrate binding site. The FMN site is built by K219 and T247. Position 248–249 (248–249 (NT)) interacts with substrate. FMN-binding positions include G270, G299, and 320 to 321 (YS).

The protein belongs to the dihydroorotate dehydrogenase family. Type 2 subfamily. Monomer. FMN serves as cofactor.

It is found in the cell membrane. It carries out the reaction (S)-dihydroorotate + a quinone = orotate + a quinol. It functions in the pathway pyrimidine metabolism; UMP biosynthesis via de novo pathway; orotate from (S)-dihydroorotate (quinone route): step 1/1. Functionally, catalyzes the conversion of dihydroorotate to orotate with quinone as electron acceptor. The sequence is that of Dihydroorotate dehydrogenase (quinone) from Haemophilus influenzae (strain PittEE).